Here is a 379-residue protein sequence, read N- to C-terminus: DNA replication and repair protein RecF (379 aa).

30–37 (GDNAQGKS) lines the ATP pocket.

Belongs to the RecF family.

It localises to the cytoplasm. Functionally, the RecF protein is involved in DNA metabolism; it is required for DNA replication and normal SOS inducibility. RecF binds preferentially to single-stranded, linear DNA. It also seems to bind ATP. The sequence is that of DNA replication and repair protein RecF from Thermosynechococcus vestitus (strain NIES-2133 / IAM M-273 / BP-1).